Consider the following 834-residue polypeptide: U-box domain-containing protein 33 (834 aa).

The segment at 232–308 (FSTPESEHQH…SPSSFPDGVD (77 aa)) is disordered. Composition is skewed to polar residues over residues 243–273 (SRVQ…GSLN) and 284–293 (SEVTGSATVM). Positions 334 to 462 (LRRQKAEKNA…SHAETSTLQL (129 aa)) form a coiled coil. The region spanning 481 to 744 (FDSTLKIGEG…EVWRVLEPMR (264 aa)) is the Protein kinase domain. ATP is bound by residues 487–495 (IGEGGYGSI) and lysine 508. Aspartate 603 serves as the catalytic Proton acceptor. Residues 762-834 (IAPPYFICPI…AIQEWLQHHL (73 aa)) enclose the U-box domain.

The protein belongs to the protein kinase superfamily. Ser/Thr protein kinase family.

It catalyses the reaction L-seryl-[protein] + ATP = O-phospho-L-seryl-[protein] + ADP + H(+). The catalysed reaction is L-threonyl-[protein] + ATP = O-phospho-L-threonyl-[protein] + ADP + H(+). The enzyme catalyses S-ubiquitinyl-[E2 ubiquitin-conjugating enzyme]-L-cysteine + [acceptor protein]-L-lysine = [E2 ubiquitin-conjugating enzyme]-L-cysteine + N(6)-ubiquitinyl-[acceptor protein]-L-lysine.. Its pathway is protein modification; protein ubiquitination. Functionally, functions as an E3 ubiquitin ligase. This Arabidopsis thaliana (Mouse-ear cress) protein is U-box domain-containing protein 33 (PUB33).